The chain runs to 411 residues: Envelope glycoprotein G (411 aa).

Positions 1–19 are cleaved as a signal peptide; that stretch reads MLTVLAALSLLSLLTSATG. Asn-83, Asn-138, Asn-222, Asn-245, and Asn-317 each carry an N-linked (GlcNAc...) asparagine; by host glycan. Polar residues-rich tracts occupy residues 306-327 and 334-345; these read VPSS…SNSP and SVNSDDSTHTGG. The disordered stretch occupies residues 306–345; that stretch reads VPSSAAESSLENQSTQEESNSPEVAHLRSVNSDDSTHTGG. A helical transmembrane segment spans residues 364 to 384; sequence LALIGLGTCAMIGLIVYICVL.

This sequence belongs to the alphaherpesvirinae glycoprotein G family.

Its subcellular location is the virion membrane. Its function is as follows. Chemokine-binding protein that inhibits neutrophils' chemotaxis. In Equine herpesvirus 1 (strain Kentucky A) (EHV-1), this protein is Envelope glycoprotein G (gG).